We begin with the raw amino-acid sequence, 215 residues long: MADKSDLNALSGRFRGYYPVVIDVETAGFNAQSDALLEIAAVTLQMNKEGWLLPDETLHFHVEPFEGANLQPEALAFNGIDPTNPLRGAVSEHDALHAIFKAVRKGIKDKGCNRAIIVAHNANFDHSFVMAAAERASLKRNPFHPFATFDTAALSGLVLGQTVLAKACLAAGIPFDSSQAHSALYDTLQTAKLFCELVNRWKKLGGWPLPTAESE.

The region spanning 20–194 is the Exonuclease domain; it reads VVIDVETAGF…YDTLQTAKLF (175 aa). Residues Asp-23, Glu-25, His-181, and Asp-186 each coordinate Mg(2+). His-181 acts as the Proton donor/acceptor in catalysis.

It belongs to the RNase T family. Homodimer. Mg(2+) serves as cofactor.

Its function is as follows. Trims short 3' overhangs of a variety of RNA species, leaving a one or two nucleotide 3' overhang. Responsible for the end-turnover of tRNA: specifically removes the terminal AMP residue from uncharged tRNA (tRNA-C-C-A). Also appears to be involved in tRNA biosynthesis. This is Ribonuclease T from Yersinia pseudotuberculosis serotype I (strain IP32953).